A 499-amino-acid polypeptide reads, in one-letter code: Glutamyl-tRNA(Gln) amidotransferase subunit A (499 aa).

Catalysis depends on charge relay system residues K80 and S155. The active-site Acyl-ester intermediate is the S179.

It belongs to the amidase family. GatA subfamily. Heterotrimer of A, B and C subunits.

It catalyses the reaction L-glutamyl-tRNA(Gln) + L-glutamine + ATP + H2O = L-glutaminyl-tRNA(Gln) + L-glutamate + ADP + phosphate + H(+). Allows the formation of correctly charged Gln-tRNA(Gln) through the transamidation of misacylated Glu-tRNA(Gln) in organisms which lack glutaminyl-tRNA synthetase. The reaction takes place in the presence of glutamine and ATP through an activated gamma-phospho-Glu-tRNA(Gln). The polypeptide is Glutamyl-tRNA(Gln) amidotransferase subunit A (Cupriavidus metallidurans (strain ATCC 43123 / DSM 2839 / NBRC 102507 / CH34) (Ralstonia metallidurans)).